Here is a 304-residue protein sequence, read N- to C-terminus: Probable solute-binding protein AdeT1 (304 aa).

This sequence belongs to the bacterial solute-binding protein 7 family.

Its function is as follows. Mediates antimicrobial resistance via active efflux. Contributes to resistance to antibiotics such as chloramphenicol, erythromycin and novobiocin. May be part of a tripartite ATP-independent periplasmic (TRAP) transport system. The sequence is that of Probable solute-binding protein AdeT1 from Acinetobacter baumannii.